A 504-amino-acid chain; its full sequence is Pentatricopeptide repeat-containing protein At1g05600 (504 aa).

12 PPR repeats span residues 45–79 (NGSV…SCEC), 80–114 (KDSV…NCVN), 115–145 (WSLS…YCYG), 151–185 (RITA…GCYP), 186–216 (DRDS…MFWR), 225–259 (DIVV…GLKA), 260–296 (PKRC…GAIP), 297–331 (CLDS…GFEP), 332–367 (TPFI…HCLP), 368–398 (TVGV…MSKQ), 404–438 (NEET…SHFP), and 439–473 (GVET…DMVP).

It belongs to the PPR family. P subfamily.

The protein is Pentatricopeptide repeat-containing protein At1g05600 of Arabidopsis thaliana (Mouse-ear cress).